The chain runs to 914 residues: Ubiquitin carboxyl-terminal hydrolase 20 (914 aa).

The segment at 6 to 111 adopts a UBP-type zinc-finger fold; sequence DLCPHLDSIG…GSSSKFSEQD (106 aa). Zn(2+) is bound by residues Cys8, His10, Cys30, Cys33, Cys43, Cys48, Cys53, His60, His64, His70, Cys83, and Cys86. Residues Ser112, Ser132, and Ser134 each carry the phosphoserine modification. Residues 145–685 enclose the USP domain; it reads TGMKNLGNSC…EGYVLFYRKS (541 aa). The active-site Nucleophile is Cys154. 2 disordered regions span residues 257–347 and 360–415; these read LTEA…VDED and QPAE…ASPV. The residue at position 258 (Thr258) is a Phosphothreonine. The span at 259-279 shows a compositional bias: basic and acidic residues; it reads EARDSDSSDTDEKREGDRSPS. Ser305 is subject to Phosphoserine. The segment covering 316-332 has biased composition (basic and acidic residues); it reads EAGRAISEKERMKDRKF. Ser368 carries the phosphoserine modification. Position 377 is a phosphothreonine (Thr377). Phosphoserine occurs at positions 408 and 413. Catalysis depends on His643, which acts as the Proton acceptor. DUSP domains are found at residues 687–780 and 789–892; these read EEAM…LYVC and ALAK…RQSV.

Belongs to the peptidase C19 family. USP20/USP33 subfamily. Interacts with VHL, leading to its ubiquitination and subsequent degradation. Interacts with CCP110. Interacts with DIO2. Interacts with HIF1A. Interacts with ADRB2. Interacts with USP18. In terms of processing, ubiquitinated via a VHL-dependent pathway for proteasomal degradation.

It is found in the cytoplasm. Its subcellular location is the endoplasmic reticulum. It localises to the perinuclear region. The protein resides in the cytoskeleton. The protein localises to the microtubule organizing center. It is found in the centrosome. The enzyme catalyses Thiol-dependent hydrolysis of ester, thioester, amide, peptide and isopeptide bonds formed by the C-terminal Gly of ubiquitin (a 76-residue protein attached to proteins as an intracellular targeting signal).. Functionally, deubiquitinating enzyme that plays a role in many cellular processes including autophagy, cellular antiviral response or membrane protein biogenesis. Attenuates TLR4-mediated NF-kappa-B signaling by cooperating with beta-arrestin-2/ARRB2 and inhibiting TRAF6 autoubiquitination. Promotes cellular antiviral responses by deconjugating 'Lys-33' and 'Lys-48'-linked ubiquitination of STING1 leading to its stabilization. Plays an essential role in autophagy induction by regulating the ULK1 stability through deubiquitination of ULK1. Acts as a positive regulator for NF-kappa-B activation by TNF-alpha through deubiquitinating 'Lys-48'-linked polyubiquitination of SQSTM1, leading to its increased stability. Acts as a regulator of G-protein coupled receptor (GPCR) signaling by mediating the deubiquitination beta-2 adrenergic receptor (ADRB2). Plays a central role in ADRB2 recycling and resensitization after prolonged agonist stimulation by constitutively binding ADRB2, mediating deubiquitination of ADRB2 and inhibiting lysosomal trafficking of ADRB2. Upon dissociation, it is probably transferred to the translocated beta-arrestins, possibly leading to beta-arrestins deubiquitination and disengagement from ADRB2. This suggests the existence of a dynamic exchange between the ADRB2 and beta-arrestins. Deubiquitinates DIO2, thereby regulating thyroid hormone regulation. Deubiquitinates HIF1A, leading to stabilize HIF1A and enhance HIF1A-mediated activity. Deubiquitinates MCL1, a pivotal member of the anti-apoptotic Bcl-2 protein family to regulate its stability. Within the endoplasmic reticulum, participates with USP33 in the rescue of post-translationally targeted membrane proteins that are inappropriately ubiquitinated by the cytosolic protein quality control in the cytosol. The protein is Ubiquitin carboxyl-terminal hydrolase 20 (USP20) of Homo sapiens (Human).